The chain runs to 1193 residues: Nucleolar protein 6 (1193 aa).

2 disordered regions span residues 1–69 and 1137–1193; these read MRFV…TKNV and KREQ…KVLK. 2 stretches are compositionally biased toward basic and acidic residues: residues 31–46 and 1151–1161; these read AGDH…KIAK and DANKAEEESKP. A Phosphoserine modification is found at Ser35. The span at 1162–1184 shows a compositional bias: basic residues; it reads KPKKHRQRKGTGKKALPKRKRLI.

The protein belongs to the NRAP family. Part of the small subunit (SSU) processome, composed of more than 70 proteins and the RNA chaperone small nucleolar RNA (snoRNA) U3. In terms of tissue distribution, expressed in nurse cells at stages 9-10 of oogenesis and exported to the oocyte.

It localises to the nucleus. It is found in the nucleolus. The protein resides in the chromosome. Its function is as follows. Part of the small subunit (SSU) processome, first precursor of the small eukaryotic ribosomal subunit. During the assembly of the SSU processome in the nucleolus, many ribosome biogenesis factors, an RNA chaperone and ribosomal proteins associate with the nascent pre-rRNA and work in concert to generate RNA folding, modifications, rearrangements and cleavage as well as targeted degradation of pre-ribosomal RNA by the RNA exosome. The chain is Nucleolar protein 6 from Drosophila melanogaster (Fruit fly).